The following is a 370-amino-acid chain: Elongation factor Ts, mitochondrial (370 aa).

Residues 1-29 (MALLSAAPRALRLPRRLPLGAALPALRAL) constitute a mitochondrion transit peptide.

This sequence belongs to the EF-Ts family.

It localises to the mitochondrion. Its function is as follows. Associates with the EF-Tu.GDP complex and induces the exchange of GDP to GTP. It remains bound to the aminoacyl-tRNA.EF-Tu.GTP complex up to the GTP hydrolysis stage on the ribosome. This is Elongation factor Ts, mitochondrial from Cryptococcus neoformans var. neoformans serotype D (strain B-3501A) (Filobasidiella neoformans).